The sequence spans 814 residues: Transcription factor oryO (814 aa).

2 disordered regions span residues 1–59 (MTAR…PACN) and 699–723 (PMDGSSTGLSDRTPPSESELSSIPP). Polar residues-rich tracts occupy residues 16 to 27 (ANPTVRDQTQQD) and 49 to 59 (QPDNTSSPACN). Residues 58–85 (CNQCRTRKIRCDRQQPKCSNCRRADVEC) constitute a DNA-binding region (zn(2)-C6 fungal-type). Over residues 713-723 (PSESELSSIPP) the composition is skewed to low complexity.

It localises to the nucleus. Transcription factor that regulates the expression of the gene cluster that mediates the biosynthesis of oryzines, natural products with an unusual maleidride backbone. In Aspergillus oryzae (strain ATCC 42149 / RIB 40) (Yellow koji mold), this protein is Transcription factor oryO.